A 262-amino-acid polypeptide reads, in one-letter code: Phycoerythrobilin:ferredoxin oxidoreductase (262 aa).

The protein belongs to the HY2 family.

The enzyme catalyses (3Z)-phycoerythrobilin + oxidized 2[4Fe-4S]-[ferredoxin] = 15,16-dihydrobiliverdin + reduced 2[4Fe-4S]-[ferredoxin] + 2 H(+). Catalyzes the two-electron reduction of the C2 and C3(1) diene system of 15,16-dihydrobiliverdin. This is Phycoerythrobilin:ferredoxin oxidoreductase from Synechococcus sp. (strain RCC307).